Reading from the N-terminus, the 293-residue chain is Cell division protein FtsQ (293 aa).

Topologically, residues 1 to 29 are cytoplasmic; the sequence is MSQVRSKSQQGKRQAKPQEVVPATILTEQ. A helical transmembrane segment spans residues 30–52; that stretch reads LSTYAFGTVTAGAVMVAVAAWMG. Residues 53–293 are Periplasmic-facing; it reads GSLASIDERI…SQIDDKSGGA (241 aa). One can recognise a POTRA domain in the interval 75-144; the sequence is FTVTKISIEG…NDIWILAENR (70 aa).

This sequence belongs to the FtsQ/DivIB family. FtsQ subfamily.

The protein resides in the cell inner membrane. Its function is as follows. Essential cell division protein. The sequence is that of Cell division protein FtsQ from Hirschia baltica (strain ATCC 49814 / DSM 5838 / IFAM 1418).